The following is a 371-amino-acid chain: Neuropeptide S receptor (371 aa).

The Extracellular segment spans residues 1-52 (MPANLTEGSFHANQTVPMLDSSPVACTEIVTFTEALVAEEWGSFYSSFKTEQ). 2 N-linked (GlcNAc...) asparagine glycosylation sites follow: Asn4 and Asn13. A helical transmembrane segment spans residues 53 to 73 (LITLWVLFVVTIVGNSVVLFS). At 74–82 (TCRRKRKSR) the chain is on the cytoplasmic side. A helical membrane pass occupies residues 83–103 (MTFFVTQLAITDSFTGLINIL). Over 104 to 123 (TDIIWRFTGDFMAPDLVCRV) the chain is Extracellular. An intrachain disulfide couples Cys121 to Cys197. The chain crosses the membrane as a helical span at residues 124–144 (VRYLQVVLLYASTYVLVSLSI). At 145 to 164 (DRYHAIVYPMKFLQGEKQAK) the chain is on the cytoplasmic side. Residues 165-185 (VLIGIAWSLSFLFSIPTLIIF) form a helical membrane-spanning segment. Over 186–212 (GKRTLSNGEVQCWALWPDDSYWTPYMT) the chain is Extracellular. A helical transmembrane segment spans residues 213–233 (IVAFLVYFIPLAIISVIYGLV). At 234–275 (IRTIWMKSKTHETVISNCSDGKLCCSYNRGLISKAKIKAIKY) the chain is on the cytoplasmic side. Residues 276-296 (SIVIILAFICCWSPYFLFDIL) form a helical membrane-spanning segment. Residues 297–312 (DNFNVLPDTKERFYAS) are Extracellular-facing. Residues 313-333 (VIIQNLPALNSAINPLIYCIF) traverse the membrane as a helical segment. Residues 334-371 (SSSICSPCKMQRSQDSRMTYRERSERHEMQILSKPEFI) are Cytoplasmic-facing.

It belongs to the G-protein coupled receptor 1 family. Vasopressin/oxytocin receptor subfamily.

The protein resides in the cell membrane. Its function is as follows. G-protein coupled receptor for neuropeptide S (NPS). Promotes mobilization of intracellular Ca(2+) stores. Inhibits cell growth in response to NPS binding. Involved in pathogenesis of asthma and other IgE-mediated diseases. The chain is Neuropeptide S receptor (Npsr1) from Mus musculus (Mouse).